Here is a 223-residue protein sequence, read N- to C-terminus: Ribonuclease T (223 aa).

The 176-residue stretch at 20-195 folds into the Exonuclease domain; it reads VVIDVETAGF…YDTERTAELF (176 aa). Mg(2+)-binding residues include D23, E25, H182, and D187. The Proton donor/acceptor role is filled by H182.

It belongs to the RNase T family. In terms of assembly, homodimer. Mg(2+) is required as a cofactor.

Trims short 3' overhangs of a variety of RNA species, leaving a one or two nucleotide 3' overhang. Responsible for the end-turnover of tRNA: specifically removes the terminal AMP residue from uncharged tRNA (tRNA-C-C-A). Also appears to be involved in tRNA biosynthesis. The polypeptide is Ribonuclease T (Photobacterium profundum (strain SS9)).